The chain runs to 146 residues: Protein archease (146 aa).

3 residues coordinate Ca(2+): Asp16, Asp145, and Ile146.

It belongs to the archease family.

Activates the tRNA-splicing ligase complex by facilitating the enzymatic turnover of catalytic subunit RtcB. Acts by promoting the guanylylation of RtcB, a key intermediate step in tRNA ligation. Can also alter the NTP specificity of RtcB such that ATP, dGTP or ITP is used efficiently. The chain is Protein archease from Methanosarcina acetivorans (strain ATCC 35395 / DSM 2834 / JCM 12185 / C2A).